Here is a 39-residue protein sequence, read N- to C-terminus: Photosystem II reaction center protein Y (39 aa).

A helical membrane pass occupies residues 4 to 24; the sequence is RVIVVVSPLLIAATWAAINIG.

Belongs to the PsbY family. As to quaternary structure, PSII is composed of 1 copy each of membrane proteins PsbA, PsbB, PsbC, PsbD, PsbE, PsbF, PsbH, PsbI, PsbJ, PsbK, PsbL, PsbM, PsbT, PsbX, PsbY, PsbZ, Psb30/Ycf12, peripheral proteins PsbO, CyanoQ (PsbQ), PsbU, PsbV and a large number of cofactors. It forms dimeric complexes.

Its subcellular location is the cellular thylakoid membrane. Its function is as follows. Loosely associated component of the core of photosystem II (PSII), it is not always seen in crystals. PSII is a light-driven water plastoquinone oxidoreductase, using light energy to abstract electrons from H(2)O, generating a proton gradient subsequently used for ATP formation. The chain is Photosystem II reaction center protein Y from Synechocystis sp. (strain ATCC 27184 / PCC 6803 / Kazusa).